Reading from the N-terminus, the 579-residue chain is Peptidyl-prolyl cis-trans isomerase-like 2 (579 aa).

The U-box domain maps to 42 to 115; sequence RRLPFNFCSL…GEYVDPVTYK (74 aa). A disordered region spans residues 227–261; the sequence is AERAQRAESGAASKGLTKPGMSATAASQKTVSHQA. Over residues 250-259 the composition is skewed to polar residues; sequence TAASQKTVSH. Residues 311-470 form the PPIase cyclophilin-type domain; the sequence is QKGYARISTT…PDIRIKDVTI (160 aa). Residues 555–579 form a disordered region; it reads EGPEPEPAKKKFKGGGGFGDFSSWD.

It belongs to the cyclophilin-type PPIase family. PPIL2 subfamily.

Its subcellular location is the nucleus. It catalyses the reaction [protein]-peptidylproline (omega=180) = [protein]-peptidylproline (omega=0). The enzyme catalyses S-ubiquitinyl-[E2 ubiquitin-conjugating enzyme]-L-cysteine + [acceptor protein]-L-lysine = [E2 ubiquitin-conjugating enzyme]-L-cysteine + N(6)-ubiquitinyl-[acceptor protein]-L-lysine.. The protein operates within protein modification; protein ubiquitination. In terms of biological role, may catalyze the cis-trans isomerization of proline imidic peptide bonds in oligopeptides thereby assisting the folding of proteins. May also function as a chaperone, playing a role in intracellular transport of proteins. May also have a protein ubiquitin ligase activity acting as an E3 ubiquitin protein ligase or as a ubiquitin-ubiquitin ligase promoting elongation of ubiquitin chains on proteins. In Aspergillus fumigatus (strain ATCC MYA-4609 / CBS 101355 / FGSC A1100 / Af293) (Neosartorya fumigata), this protein is Peptidyl-prolyl cis-trans isomerase-like 2 (cyp8).